The primary structure comprises 66 residues: Large ribosomal subunit protein bL35 (66 aa).

Belongs to the bacterial ribosomal protein bL35 family.

The protein is Large ribosomal subunit protein bL35 of Wigglesworthia glossinidia brevipalpis.